Consider the following 546-residue polypeptide: Chaperonin GroEL (546 aa).

ATP contacts are provided by residues 30–33, 87–91, glycine 414, 477–479, and aspartate 493; these read TLGP, DGTTT, and NAL.

This sequence belongs to the chaperonin (HSP60) family. As to quaternary structure, forms a cylinder of 14 subunits composed of two heptameric rings stacked back-to-back. Interacts with the co-chaperonin GroES.

It localises to the cytoplasm. It catalyses the reaction ATP + H2O + a folded polypeptide = ADP + phosphate + an unfolded polypeptide.. Its function is as follows. Together with its co-chaperonin GroES, plays an essential role in assisting protein folding. The GroEL-GroES system forms a nano-cage that allows encapsulation of the non-native substrate proteins and provides a physical environment optimized to promote and accelerate protein folding. The sequence is that of Chaperonin GroEL from Syntrophomonas wolfei subsp. wolfei (strain DSM 2245B / Goettingen).